We begin with the raw amino-acid sequence, 491 residues long: Lysine--tRNA ligase (491 aa).

2 residues coordinate Mg(2+): Glu400 and Glu407.

This sequence belongs to the class-II aminoacyl-tRNA synthetase family. Homodimer. The cofactor is Mg(2+).

It is found in the cytoplasm. It carries out the reaction tRNA(Lys) + L-lysine + ATP = L-lysyl-tRNA(Lys) + AMP + diphosphate. This Mesomycoplasma hyopneumoniae (strain J / ATCC 25934 / NCTC 10110) (Mycoplasma hyopneumoniae) protein is Lysine--tRNA ligase.